The primary structure comprises 445 residues: Glutamate-1-semialdehyde 2,1-aminomutase (445 aa).

K264 carries the N6-(pyridoxal phosphate)lysine modification.

Belongs to the class-III pyridoxal-phosphate-dependent aminotransferase family. HemL subfamily. Pyridoxal 5'-phosphate is required as a cofactor.

Its subcellular location is the cytoplasm. The catalysed reaction is (S)-4-amino-5-oxopentanoate = 5-aminolevulinate. The protein operates within porphyrin-containing compound metabolism; protoporphyrin-IX biosynthesis; 5-aminolevulinate from L-glutamyl-tRNA(Glu): step 2/2. The sequence is that of Glutamate-1-semialdehyde 2,1-aminomutase from Halobacterium salinarum (strain ATCC 29341 / DSM 671 / R1).